We begin with the raw amino-acid sequence, 423 residues long: MATKRRPLRPNLGGTAGSPSSSGSNMNFRPGGPDITRSEARGTRPTAAPTSIREILVMGVIHLCKKTIFFNTDLKVALYLGSLFVISVIGDFVPFPKTYFARSDNLFNQYFVKIGWGWTLLFVVPFLVLSAYTITCGDHKRMLRHHFPRIVIATFFWFFWTKLFNVVENSYGRCTTKGYATKSSCLKAGHLWKGFDISGHAFILIHSSLVLIEEARPIIRWETIKEHIRNERHNRSTAENSGTNPLRTLNEEQMRSLQFLYKRLTPIIRTLFIGMAALQLLWDIMLVGTMLYYHRMIEKVISGIIAILTWYFTYRFWYPTPGLLPEAPGNGSFSYQREIPTFPFKRPSHLSTGAATTSSGSNSSRTNLNGKAATTGVPRDQQIPTFMGMPLFTSPKAASAAANLLMSDQQKRERDREQQTLES.

Positions 1-47 are disordered; that stretch reads MATKRRPLRPNLGGTAGSPSSSGSNMNFRPGGPDITRSEARGTRPTA. Residues 1–75 are Cytoplasmic-facing; it reads MATKRRPLRP…KTIFFNTDLK (75 aa). The helical transmembrane segment at 76–96 threads the bilayer; that stretch reads VALYLGSLFVISVIGDFVPFP. The Lumenal portion of the chain corresponds to 97–113; sequence KTYFARSDNLFNQYFVK. A helical transmembrane segment spans residues 114–134; the sequence is IGWGWTLLFVVPFLVLSAYTI. The Cytoplasmic portion of the chain corresponds to 135–146; the sequence is TCGDHKRMLRHH. A helical membrane pass occupies residues 147 to 167; sequence FPRIVIATFFWFFWTKLFNVV. At 168–191 the chain is on the lumenal side; it reads ENSYGRCTTKGYATKSSCLKAGHL. Residues 192 to 212 form a helical membrane-spanning segment; that stretch reads WKGFDISGHAFILIHSSLVLI. Residue H200 is part of the active site. At 213 to 270 the chain is on the cytoplasmic side; the sequence is EEARPIIRWETIKEHIRNERHNRSTAENSGTNPLRTLNEEQMRSLQFLYKRLTPIIRT. Residues 271 to 291 traverse the membrane as a helical segment; that stretch reads LFIGMAALQLLWDIMLVGTML. Over 292–299 the chain is Lumenal; sequence YYHRMIEK. The active site involves H294. Residues 300–320 traverse the membrane as a helical segment; that stretch reads VISGIIAILTWYFTYRFWYPT. Residues 321–423 lie on the Cytoplasmic side of the membrane; it reads PGLLPEAPGN…RDREQQTLES (103 aa). Disordered stretches follow at residues 344 to 381 and 400 to 423; these read FKRP…PRDQ and AAAN…TLES. The segment covering 351 to 367 has biased composition (low complexity); the sequence is STGAATTSSGSNSSRTN. Residues 409-423 show a composition bias toward basic and acidic residues; it reads QQKRERDREQQTLES.

Belongs to the FIT family. FIT2 subfamily.

The protein resides in the endoplasmic reticulum membrane. The catalysed reaction is an acyl-CoA + H2O = an acyl-4'-phosphopantetheine + adenosine 3',5'-bisphosphate + 2 H(+). In terms of biological role, fatty acyl-coenzyme A (CoA) diphosphatase that hydrolyzes fatty acyl-CoA to yield acyl-4'-phosphopantetheine and adenosine 3',5'-bisphosphate. Preferentially hydrolyzes unsaturated long-chain acyl-CoA substrates in the endoplasmic reticulum (ER) lumen. This catalytic activity is required for maintaining ER structure and for lipid droplets (LDs) biogenesis, which are lipid storage organelles involved in maintaining lipid and energy homeostasis. May directly bind to diacylglycerol (DAGs) and triacylglycerol, which is also important for LD biogenesis. May support directional budding of nacent LDs from the ER into the cytosol by reducing DAG levels at sites of LD formation. Plays a role in the regulation of cell morphology and cytoskeletal organization. Required for correct morphology of nociceptive multi-dendritic sensory neurons. Required for normal mechanical amplification in hearing. The polypeptide is Acyl-coenzyme A diphosphatase FITM2 (Drosophila melanogaster (Fruit fly)).